The chain runs to 130 residues: Large ribosomal subunit protein bL21 (130 aa).

This sequence belongs to the bacterial ribosomal protein bL21 family. Part of the 50S ribosomal subunit. Contacts protein L20.

Its function is as follows. This protein binds to 23S rRNA in the presence of protein L20. The polypeptide is Large ribosomal subunit protein bL21 (Trichormus variabilis (strain ATCC 29413 / PCC 7937) (Anabaena variabilis)).